A 24-amino-acid polypeptide reads, in one-letter code: Transaldolase (24 aa).

The protein belongs to the transaldolase family.

It localises to the cytoplasm. It carries out the reaction D-sedoheptulose 7-phosphate + D-glyceraldehyde 3-phosphate = D-erythrose 4-phosphate + beta-D-fructose 6-phosphate. It functions in the pathway carbohydrate degradation; pentose phosphate pathway; D-glyceraldehyde 3-phosphate and beta-D-fructose 6-phosphate from D-ribose 5-phosphate and D-xylulose 5-phosphate (non-oxidative stage): step 2/3. In terms of biological role, transaldolase is important for the balance of metabolites in the pentose-phosphate pathway. This chain is Transaldolase, found in Capsicum annuum var. annuum (Red pepper).